Consider the following 289-residue polypeptide: 4-hydroxy-tetrahydrodipicolinate synthase (289 aa).

Thr44 contacts pyruvate. The Proton donor/acceptor role is filled by Tyr130. Catalysis depends on Lys158, which acts as the Schiff-base intermediate with substrate. Ile200 provides a ligand contact to pyruvate.

Belongs to the DapA family. In terms of assembly, homotetramer; dimer of dimers.

The protein localises to the cytoplasm. The catalysed reaction is L-aspartate 4-semialdehyde + pyruvate = (2S,4S)-4-hydroxy-2,3,4,5-tetrahydrodipicolinate + H2O + H(+). It functions in the pathway amino-acid biosynthesis; L-lysine biosynthesis via DAP pathway; (S)-tetrahydrodipicolinate from L-aspartate: step 3/4. Catalyzes the condensation of (S)-aspartate-beta-semialdehyde [(S)-ASA] and pyruvate to 4-hydroxy-tetrahydrodipicolinate (HTPA). The polypeptide is 4-hydroxy-tetrahydrodipicolinate synthase (Archaeoglobus fulgidus (strain ATCC 49558 / DSM 4304 / JCM 9628 / NBRC 100126 / VC-16)).